The chain runs to 515 residues: 2,3-bisphosphoglycerate-independent phosphoglycerate mutase 1 (515 aa).

Residues aspartate 14 and serine 64 each contribute to the Mn(2+) site. Serine 64 acts as the Phosphoserine intermediate in catalysis. Residues histidine 125, 155-156 (RD), arginine 187, arginine 193, 264-267 (RADR), and lysine 337 each bind substrate. Positions 404, 408, 445, 446, and 464 each coordinate Mn(2+).

This sequence belongs to the BPG-independent phosphoglycerate mutase family. Mn(2+) serves as cofactor.

It catalyses the reaction (2R)-2-phosphoglycerate = (2R)-3-phosphoglycerate. It participates in carbohydrate degradation; glycolysis; pyruvate from D-glyceraldehyde 3-phosphate: step 3/5. In terms of biological role, catalyzes the interconversion of 2-phosphoglycerate and 3-phosphoglycerate. The protein is 2,3-bisphosphoglycerate-independent phosphoglycerate mutase 1 of Methanosarcina acetivorans (strain ATCC 35395 / DSM 2834 / JCM 12185 / C2A).